Reading from the N-terminus, the 131-residue chain is Small ribosomal subunit protein uS8 (131 aa).

Belongs to the universal ribosomal protein uS8 family. Part of the 30S ribosomal subunit. Contacts proteins S5 and S12.

In terms of biological role, one of the primary rRNA binding proteins, it binds directly to 16S rRNA central domain where it helps coordinate assembly of the platform of the 30S subunit. The polypeptide is Small ribosomal subunit protein uS8 (Prosthecochloris aestuarii (strain DSM 271 / SK 413)).